A 98-amino-acid chain; its full sequence is DNA-binding protein Fis (98 aa).

The H-T-H motif DNA-binding region spans 74–93; sequence QTRAATMMGINRGTLRKKLK.

It belongs to the transcriptional regulatory Fis family. In terms of assembly, homodimer.

In terms of biological role, activates ribosomal RNA transcription. Plays a direct role in upstream activation of rRNA promoters. This is DNA-binding protein Fis from Vibrio parahaemolyticus serotype O3:K6 (strain RIMD 2210633).